The chain runs to 1074 residues: Collagen, type I, alpha 1a (1074 aa).

Residues 1-13 (KSPAMPVPGPMGP) are compositionally biased toward pro residues. Positions 1-1010 (KSPAMPVPGP…PQEKAPDPYR (1010 aa)) are disordered. The segment covering 14 to 36 (MGPRSGPQGFPGEAGAAGAMGPR) has biased composition (low complexity). The segment covering 45–59 (NGEDGESGKPGRGGE) has biased composition (basic and acidic residues). Over residues 129-147 (TGAAGAAGARGNDGAAGAA) the composition is skewed to low complexity. Residues 149 to 162 (PPGPTGPAGPPGFP) are compositionally biased toward pro residues. The segment covering 163 to 181 (GGPGAKGDAGAQGGRGPEG) has biased composition (gly residues). 3 stretches are compositionally biased toward low complexity: residues 182-225 (PAGA…AGAP), 234-272 (SGPQ…APGV), and 290-299 (EPGAAGARGA). Residues 301–313 (GERGGPGGRGFPG) are compositionally biased toward gly residues. Composition is skewed to low complexity over residues 377–392 (VGAR…PGPK), 469–530 (VPGE…QGMP), and 563–578 (RGLT…AGAT). Over residues 588-597 (GPVGPGGARG) the composition is skewed to gly residues. 2 stretches are compositionally biased toward low complexity: residues 611–647 (AGFA…AGPT) and 661–683 (PKGA…AGRV). Over residues 685-697 (PPGPSGNPGPPGP) the composition is skewed to pro residues. Low complexity-rich tracts occupy residues 715 to 742 (PAGR…SEGA) and 803 to 823 (PGLA…SEGS). Pro residues predominate over residues 847–857 (APGPPGAPGPV). Residues 871–890 (PAGPAGSAGPAGPRGPAGAP) show a composition bias toward low complexity. Residues 893 to 907 (RGDKGESGEAGERGH) are compositionally biased toward basic and acidic residues. Residues 920 to 956 (SGSSGEQGPAGAAGPAGPRGPAGSAGSPGKDGMSGLP) show a composition bias toward low complexity. Residues 974 to 986 (AGPPGPPGPPGAP) are compositionally biased toward pro residues. The region spanning 1014 to 1074 (LEVDSTLKSL…GLEVGPVCFL (61 aa)) is the Fibrillar collagen NC1 domain.

The protein belongs to the fibrillar collagen family.

It is found in the secreted. It localises to the extracellular space. The protein localises to the extracellular matrix. The protein is Collagen, type I, alpha 1a of Epinephelus marginatus (Dusky grouper).